Consider the following 117-residue polypeptide: uncharacterized protein (117 aa).

A helical membrane pass occupies residues 76 to 96; it reads FIMSSGCFLIASLSCVGLTVF.

The protein resides in the membrane. This is an uncharacterized protein from Saccharomyces cerevisiae (strain ATCC 204508 / S288c) (Baker's yeast).